The following is a 57-amino-acid chain: Large ribosomal subunit protein bL32c (57 aa).

The protein belongs to the bacterial ribosomal protein bL32 family.

The protein resides in the plastid. It localises to the chloroplast. This Amborella trichopoda protein is Large ribosomal subunit protein bL32c.